A 307-amino-acid chain; its full sequence is Nicotinamide/nicotinic acid mononucleotide adenylyltransferase 2 (307 aa).

NAD(+)-binding residues include serine 16 and phenylalanine 17. ATP is bound at residue histidine 24. NAD(+) is bound by residues tryptophan 92 and threonine 95. S-palmitoyl cysteine attachment occurs at residues cysteine 164 and cysteine 165. NAD(+) is bound by residues glycine 200, aspartate 202, leucine 212, tryptophan 213, and arginine 232. 271-274 (TKSR) serves as a coordination point for ATP.

Belongs to the eukaryotic NMN adenylyltransferase family. Monomer. Mg(2+) serves as cofactor. Post-translationally, degraded in response to injured neurite. Degradation is caused by polyubiquitination by MYCBP2 after recognition by FBXO45. Palmitoylated; palmitoylation is required for membrane association.

Its subcellular location is the golgi apparatus membrane. It localises to the cytoplasmic vesicle membrane. It is found in the cytoplasm. The protein localises to the cell projection. The protein resides in the axon. It catalyses the reaction beta-nicotinamide D-ribonucleotide + ATP + H(+) = diphosphate + NAD(+). The enzyme catalyses nicotinate beta-D-ribonucleotide + ATP + H(+) = deamido-NAD(+) + diphosphate. The protein operates within cofactor biosynthesis; NAD(+) biosynthesis; NAD(+) from nicotinamide D-ribonucleotide: step 1/1. Its pathway is cofactor biosynthesis; NAD(+) biosynthesis; deamido-NAD(+) from nicotinate D-ribonucleotide: step 1/1. Inhibited by P1-(adenosine-5')-P3-(nicotinamide-riboside-5')-triphosphate (Np3AD) and P1-(adenosine-5')-P4-(nicotinamide-riboside-5')-tetraphosphate (Np4AD). Its function is as follows. Nicotinamide/nicotinate-nucleotide adenylyltransferase that acts as an axon maintenance factor. Axon survival factor required for the maintenance of healthy axons: acts by delaying Wallerian axon degeneration, an evolutionarily conserved process that drives the loss of damaged axons. Catalyzes the formation of NAD(+) from nicotinamide mononucleotide (NMN) and ATP. Can also use the deamidated form; nicotinic acid mononucleotide (NaMN) as substrate but with a lower efficiency. Cannot use triazofurin monophosphate (TrMP) as substrate. Also catalyzes the reverse reaction, i.e. the pyrophosphorolytic cleavage of NAD(+). For the pyrophosphorolytic activity prefers NAD(+), NADH and NaAD as substrates and degrades nicotinic acid adenine dinucleotide phosphate (NHD) less effectively. Fails to cleave phosphorylated dinucleotides NADP(+), NADPH and NaADP(+). Also acts as an activator of ADP-ribosylation by supporting the catalytic activity of PARP16 and promoting mono-ADP-ribosylation of ribosomes by PARP16. May be involved in the maintenance of axonal integrity. This Pongo abelii (Sumatran orangutan) protein is Nicotinamide/nicotinic acid mononucleotide adenylyltransferase 2 (NMNAT2).